A 170-amino-acid chain; its full sequence is MDLKQYVTIVPDYPKEGVQFKDITTLMDKGDVYRYATDQIVEYAKEKQIDLVVGPEARGFIIGCPVAYALGVGFAPVRKEGKLPREVIKVDYGLEYGKDVLTIHKDAIKPGQRVLITDDLLATGGTIEATIKLVEELGGVVAGIAFLIELSYLDGRNKLEDYDILTLMKY.

The protein belongs to the purine/pyrimidine phosphoribosyltransferase family. In terms of assembly, homodimer.

The protein localises to the cytoplasm. It carries out the reaction AMP + diphosphate = 5-phospho-alpha-D-ribose 1-diphosphate + adenine. Its pathway is purine metabolism; AMP biosynthesis via salvage pathway; AMP from adenine: step 1/1. In terms of biological role, catalyzes a salvage reaction resulting in the formation of AMP, that is energically less costly than de novo synthesis. This Bacillus subtilis (strain 168) protein is Adenine phosphoribosyltransferase.